We begin with the raw amino-acid sequence, 442 residues long: UDP-N-acetylmuramoylalanine--D-glutamate ligase (442 aa).

115-121 (GSNGKST) lines the ATP pocket.

This sequence belongs to the MurCDEF family.

The protein localises to the cytoplasm. It carries out the reaction UDP-N-acetyl-alpha-D-muramoyl-L-alanine + D-glutamate + ATP = UDP-N-acetyl-alpha-D-muramoyl-L-alanyl-D-glutamate + ADP + phosphate + H(+). Its pathway is cell wall biogenesis; peptidoglycan biosynthesis. In terms of biological role, cell wall formation. Catalyzes the addition of glutamate to the nucleotide precursor UDP-N-acetylmuramoyl-L-alanine (UMA). This is UDP-N-acetylmuramoylalanine--D-glutamate ligase from Aliivibrio salmonicida (strain LFI1238) (Vibrio salmonicida (strain LFI1238)).